Consider the following 284-residue polypeptide: Ribosomal RNA small subunit methyltransferase A (284 aa).

S-adenosyl-L-methionine is bound by residues asparagine 28, leucine 30, glycine 55, glutamate 77, aspartate 103, and asparagine 123.

It belongs to the class I-like SAM-binding methyltransferase superfamily. rRNA adenine N(6)-methyltransferase family. RsmA subfamily.

It is found in the cytoplasm. The enzyme catalyses adenosine(1518)/adenosine(1519) in 16S rRNA + 4 S-adenosyl-L-methionine = N(6)-dimethyladenosine(1518)/N(6)-dimethyladenosine(1519) in 16S rRNA + 4 S-adenosyl-L-homocysteine + 4 H(+). In terms of biological role, specifically dimethylates two adjacent adenosines (A1518 and A1519) in the loop of a conserved hairpin near the 3'-end of 16S rRNA in the 30S particle. May play a critical role in biogenesis of 30S subunits. The protein is Ribosomal RNA small subunit methyltransferase A of Bradyrhizobium diazoefficiens (strain JCM 10833 / BCRC 13528 / IAM 13628 / NBRC 14792 / USDA 110).